The chain runs to 1122 residues: RecBCD enzyme subunit RecC (1122 aa).

Belongs to the RecC family. Heterotrimer of RecB, RecC and RecD. All subunits contribute to DNA-binding. Interacts with YgbT (Cas1). In terms of assembly, (Microbial infection) Lambda virus GamS protein interacts with the enzyme without displacing any of the subunits.

After reacting with DNA bearing a Chi site the holoenzyme is disassembled and loses exonuclease activity, DNA unwinding and Chi-directed DNA cleavage; RecB remains complexed with ssDNA, which may prevent holoenzyme reassembly. High levels of Mg(2+) (13 mM MgCl(2+)) or incubation with DNase allow holoenzyme reassembly, suggesting it is DNA bound to RecB that prevents reassembly. Its activity is regulated as follows. (Microbial infection) RecBCD is inhibited by the lambda virus gam protein (both GamL and GamS isoforms); in vitro a short preincubation prior to adding DNA results in maximal inhibition. In terms of biological role, a helicase/nuclease that prepares dsDNA breaks (DSB) for recombinational DNA repair. Binds to DSBs and unwinds DNA via a rapid (&gt;1 kb/second) and highly processive (&gt;30 kb) ATP-dependent bidirectional helicase. Unwinds dsDNA until it encounters a Chi (crossover hotspot instigator, 5'-GCTGGTGG-3') sequence from the 3' direction. Cuts ssDNA a few nucleotides 3' to Chi site, by nicking one strand or switching the strand degraded (depending on the reaction conditions). The properties and activities of the enzyme are changed at Chi. The Chi-altered holoenzyme produces a long 3'-ssDNA overhang which facilitates RecA-binding to the ssDNA for homologous DNA recombination and repair. Holoenzyme degrades any linearized DNA that is unable to undergo homologous recombination. In the holoenzyme this subunit almost certainly recognizes the wild-type Chi sequence, when added to isolated RecB increases its ATP-dependent helicase processivity. The RecBC complex requires the RecD subunit for nuclease activity, but can translocate along ssDNA in both directions. The RecBCD complex does not unwind G-quadruplex DNA. The chain is RecBCD enzyme subunit RecC from Escherichia coli (strain K12).